The following is a 635-amino-acid chain: Biosynthetic arginine decarboxylase (635 aa).

An N6-(pyridoxal phosphate)lysine modification is found at Lys100. 282–292 contributes to the substrate binding site; the sequence is LDIGGGLGVDY.

Belongs to the Orn/Lys/Arg decarboxylase class-II family. SpeA subfamily. Requires Mg(2+) as cofactor. Pyridoxal 5'-phosphate serves as cofactor.

It carries out the reaction L-arginine + H(+) = agmatine + CO2. It functions in the pathway amine and polyamine biosynthesis; agmatine biosynthesis; agmatine from L-arginine: step 1/1. Catalyzes the biosynthesis of agmatine from arginine. The protein is Biosynthetic arginine decarboxylase of Geobacter sp. (strain M21).